We begin with the raw amino-acid sequence, 592 residues long: Aspartate--tRNA(Asp/Asn) ligase (592 aa).

Position 182 (Glu182) interacts with L-aspartate. The tract at residues 206-209 is aspartate; sequence QIFK. Arg228 is an L-aspartate binding site. ATP-binding positions include 228–230 and Gln237; that span reads RDE. Residue His455 coordinates L-aspartate. Glu489 contributes to the ATP binding site. Arg496 contacts L-aspartate. 541-544 is a binding site for ATP; sequence GLDR.

The protein belongs to the class-II aminoacyl-tRNA synthetase family. Type 1 subfamily. As to quaternary structure, homodimer.

It is found in the cytoplasm. The catalysed reaction is tRNA(Asx) + L-aspartate + ATP = L-aspartyl-tRNA(Asx) + AMP + diphosphate. Its function is as follows. Aspartyl-tRNA synthetase with relaxed tRNA specificity since it is able to aspartylate not only its cognate tRNA(Asp) but also tRNA(Asn). Reaction proceeds in two steps: L-aspartate is first activated by ATP to form Asp-AMP and then transferred to the acceptor end of tRNA(Asp/Asn). This chain is Aspartate--tRNA(Asp/Asn) ligase, found in Thermoanaerobacter pseudethanolicus (strain ATCC 33223 / 39E) (Clostridium thermohydrosulfuricum).